Here is a 339-residue protein sequence, read N- to C-terminus: Formyl peptide receptor-related sequence 6 (339 aa).

Over 1 to 23 (MEANFSIPQNGSEVVFYDSTTSR) the chain is Extracellular. N-linked (GlcNAc...) asparagine glycosylation is found at N4 and N10. A helical membrane pass occupies residues 24-44 (VICIFLVVVLSITFLLGVIGN). At 45 to 62 (GLVIYVAGFRMTHTVTTI) the chain is on the cytoplasmic side. Residues 63 to 85 (CYLNLALSDFSYMASLPFQITSI) traverse the membrane as a helical segment. The Extracellular portion of the chain corresponds to 86–99 (VMNGEWLFGWFLCK). Residues C98 and C178 are joined by a disulfide bond. Residues 100–120 (FVHMIINVNLFLSIFLITFIA) form a helical membrane-spanning segment. Residues 121–144 (MDRCICVLHPVWAQNHRTVNVATK) lie on the Cytoplasmic side of the membrane. The helical transmembrane segment at 145-165 (VIFGAWILVLMLIFPHCIFVT) threads the bilayer. The Extracellular portion of the chain corresponds to 166-198 (TVKDESGKVHCICNFESWAATPEEQVKVSMTVS). Residues 199–219 (LISVTISFIIGFSIPMIFIVI) traverse the membrane as a helical segment. The Cytoplasmic portion of the chain corresponds to 220-241 (CYGLMAAKIGRRGFVNSSRPLR). Residues 242–262 (VLTAVAISFFVCWFPFQLIFL) traverse the membrane as a helical segment. Over 263 to 280 (LGNIGNKETQNNIDTWVN) the chain is Extracellular. Residues 281 to 301 (TASTLASFNSCLNPILYVFLG) traverse the membrane as a helical segment. Topologically, residues 302-339 (QQFRERLIYSLSASLERALREDSALNSDKTRNLSSQRL) are cytoplasmic.

The protein belongs to the G-protein coupled receptor 1 family. Expressed exclusively in vomeronasal tissue. Expressed in 1.2 % of a subset of sensory neurons located in the apical layer of the vomeronasal organ. Each neuron appears to express only one receptor gene. Expressed in brain, spleen, skeletal muscle and at high level in testis.

It localises to the membrane. May have an olfactory function associated with the identification of pathogens or of pathogenic states. In Mus musculus (Mouse), this protein is Formyl peptide receptor-related sequence 6 (Fpr-rs6).